We begin with the raw amino-acid sequence, 259 residues long: Haloacid dehalogenase-like hydrolase domain-containing protein 2 (259 aa).

Residues Asp-13 and Asn-15 each contribute to the Mg(2+) site. Residues 13-15 and 46-47 each bind substrate; these read DLN and TN. Residues 47–72 are a coiled coil; that stretch reads NTTKESKKDLLERLKKLEFEISEDEI. N6-succinyllysine is present on Lys-50. Lys-179 contacts substrate. Asp-204 serves as a coordination point for Mg(2+).

This sequence belongs to the HAD-like hydrolase superfamily. Mg(2+) serves as cofactor.

This Mus musculus (Mouse) protein is Haloacid dehalogenase-like hydrolase domain-containing protein 2 (Hdhd2).